The chain runs to 222 residues: 7-cyano-7-deazaguanine synthase (222 aa).

11–21 (FSGGQDSTTCL) serves as a coordination point for ATP. Zn(2+) contacts are provided by C187, C195, C198, and C201.

Belongs to the QueC family. It depends on Zn(2+) as a cofactor.

It carries out the reaction 7-carboxy-7-deazaguanine + NH4(+) + ATP = 7-cyano-7-deazaguanine + ADP + phosphate + H2O + H(+). Its pathway is purine metabolism; 7-cyano-7-deazaguanine biosynthesis. Catalyzes the ATP-dependent conversion of 7-carboxy-7-deazaguanine (CDG) to 7-cyano-7-deazaguanine (preQ(0)). This is 7-cyano-7-deazaguanine synthase from Actinobacillus pleuropneumoniae serotype 5b (strain L20).